An 80-amino-acid chain; its full sequence is Caltrin (80 aa).

Residues 1-32 (MMAGRRSWPAMATVLLALLVCLGELVDSKPQP) form the signal peptide.

Functionally, inhibits calcium transport into spermatozoa; it does not bind directly to calcium. Binds to calmodulin. Inhibits the growth of microorganisms. Seem to act as an antibiotic by permeabilizing the bacterial membrane. The chain is Caltrin (PYY2) from Bos taurus (Bovine).